The chain runs to 96 residues: MDYTKILIKPLISEKTTYIKELSRQVAFFVDPRANKIEIKKAVEAAFKVKVADVNVVNRKSSDRVRQGRVVGRVAGFKKAYVTLAPGEKIEFFEGV.

This sequence belongs to the universal ribosomal protein uL23 family. As to quaternary structure, part of the 50S ribosomal subunit. Contacts protein L29, and trigger factor when it is bound to the ribosome.

Its function is as follows. One of the early assembly proteins it binds 23S rRNA. One of the proteins that surrounds the polypeptide exit tunnel on the outside of the ribosome. Forms the main docking site for trigger factor binding to the ribosome. The polypeptide is Large ribosomal subunit protein uL23 (Nitratidesulfovibrio vulgaris (strain ATCC 29579 / DSM 644 / CCUG 34227 / NCIMB 8303 / VKM B-1760 / Hildenborough) (Desulfovibrio vulgaris)).